The following is a 319-amino-acid chain: Dehydrogenase/reductase SDR family member 9 (319 aa).

The signal sequence occupies residues 1–20 (MLLWVLALLFLCAFLWNYKG). NAD(+) contacts are provided by residues 34–58 (ITGCDSGFGNLAARTFDRKGFRVIA) and aspartate 83. Position 164 (serine 164) interacts with substrate. Tyrosine 176 functions as the Proton acceptor in the catalytic mechanism. Lysine 180 lines the NAD(+) pocket.

Belongs to the short-chain dehydrogenases/reductases (SDR) family. Homotetramer. As to expression, highly expressed in epithelium of estrus uterus.

Its subcellular location is the microsome membrane. The protein resides in the endoplasmic reticulum membrane. It carries out the reaction 3beta-hydroxy-5alpha-pregnane-20-one + NAD(+) = 5alpha-pregnane-3,20-dione + NADH + H(+). The catalysed reaction is 17beta-hydroxy-5alpha-androstan-3-one + NAD(+) = 5alpha-androstan-3,17-dione + NADH + H(+). The enzyme catalyses androsterone + NAD(+) = 5alpha-androstan-3,17-dione + NADH + H(+). It catalyses the reaction 5alpha-androstane-3alpha,17beta-diol + NAD(+) = 17beta-hydroxy-5alpha-androstan-3-one + NADH + H(+). It carries out the reaction all-trans-retinol + NAD(+) = all-trans-retinal + NADH + H(+). The catalysed reaction is 3alpha-hydroxy-5alpha-pregnan-20-one + NAD(+) = 5alpha-pregnane-3,20-dione + NADH + H(+). 3-alpha-hydroxysteroid dehydrogenase that converts 3-alpha-tetrahydroprogesterone (allopregnanolone) to dihydroxyprogesterone and 3-alpha-androstanediol to dihydroxyprogesterone. Plays also role in the biosynthesis of retinoic acid from retinaldehyde. Can utilize both NADH and NADPH. This is Dehydrogenase/reductase SDR family member 9 (Dhrs9) from Rattus norvegicus (Rat).